A 245-amino-acid chain; its full sequence is OVARIAN TUMOR DOMAIN-containing deubiquitinating enzyme 11 (245 aa).

The disordered stretch occupies residues Met-1–Thr-37. The segment covering Ala-10–Ala-35 has biased composition (low complexity). The region spanning Leu-101–Asn-225 is the OTU domain. Asp-109 is an active-site residue. Residue Cys-112 is the Nucleophile of the active site. His-218 is an active-site residue.

Belongs to the peptidase C85 family.

The catalysed reaction is Thiol-dependent hydrolysis of ester, thioester, amide, peptide and isopeptide bonds formed by the C-terminal Gly of ubiquitin (a 76-residue protein attached to proteins as an intracellular targeting signal).. Its function is as follows. Hydrolase that can remove conjugated ubiquitin from proteins in vitro and may therefore play an important regulatory role at the level of protein turnover by preventing degradation. Inactive cysteine protease. This chain is OVARIAN TUMOR DOMAIN-containing deubiquitinating enzyme 11, found in Arabidopsis thaliana (Mouse-ear cress).